The chain runs to 687 residues: Transcription activator of gluconeogenesis SNOG_12336 (687 aa).

The disordered stretch occupies residues methionine 1–arginine 56. A compositionally biased stretch (polar residues) spans glycine 32–alanine 45. Positions cysteine 63 to cysteine 91 form a DNA-binding region, zn(2)-C6 fungal-type. Composition is skewed to polar residues over residues proline 150–serine 159 and histidine 169–proline 179. 3 disordered regions span residues proline 150 to phenylalanine 214, glutamate 300 to arginine 411, and glycine 536 to alanine 561. A compositionally biased stretch (low complexity) spans proline 195–proline 212. Over residues glutamate 300 to threonine 318 the composition is skewed to polar residues. Residues proline 342–alanine 357 are compositionally biased toward low complexity. Composition is skewed to polar residues over residues asparagine 362–threonine 384, arginine 392–histidine 402, and methionine 546–alanine 561. Residues asparagine 482–threonine 553 form the PAS domain.

Belongs to the ERT1/acuK family.

Its subcellular location is the nucleus. Functionally, transcription factor which regulates nonfermentable carbon utilization. Activator of gluconeogenetic genes. The protein is Transcription activator of gluconeogenesis SNOG_12336 of Phaeosphaeria nodorum (strain SN15 / ATCC MYA-4574 / FGSC 10173) (Glume blotch fungus).